Reading from the N-terminus, the 464-residue chain is Serine/threonine-protein kinase 38-like (464 aa).

Residue A2 is modified to N-acetylalanine. Residues 63–88 form an S100B binding region; that stretch reads KKLRRSQHARKETEFLRLKRTRLGLD. A Phosphothreonine modification is found at T75. Positions 90 to 383 constitute a Protein kinase domain; it reads FESLKVIGRG…VEEIKGHPFF (294 aa). Residues 96-104 and K119 each bind ATP; that span reads IGRGAFGEV. D213 functions as the Proton acceptor in the catalytic mechanism. S282 carries the phosphoserine; by autocatalysis modification. An AGC-kinase C-terminal domain is found at 384–453; that stretch reads EGVDWEHIRE…KRFEGLTQRG (70 aa). Residue T442 is modified to Phosphothreonine; by STK24/MST3.

The protein belongs to the protein kinase superfamily. AGC Ser/Thr protein kinase family. Homodimeric S100B binds two molecules of STK38L. Interacts with MICAL1; leading to inhibit the protein kinase activity by antagonizing activation by MST1/STK4. Interacts with MOB1 and MOB2. It depends on Mg(2+) as a cofactor. In terms of tissue distribution, ubiquitously expressed with highest levels observed in the thymus.

Its subcellular location is the cytoplasm. The protein resides in the cytoskeleton. It localises to the membrane. It catalyses the reaction L-seryl-[protein] + ATP = O-phospho-L-seryl-[protein] + ADP + H(+). The enzyme catalyses L-threonyl-[protein] + ATP = O-phospho-L-threonyl-[protein] + ADP + H(+). Activated by binding of S100B which releases autoinhibitory N-lobe interactions, enabling ATP to bind and the autophosphorylation of Ser-282. Thr-442 then undergoes calcium-dependent phosphorylation by STK24/MST3. Interactions between phosphorylated Thr-442 and the N-lobe promote additional structural changes that complete the activation of the kinase. Autoinhibition is also released by the binding of MOB1/MOBKL1A and MOB2/HCCA2 to the N-terminal of STK38L. Its function is as follows. Involved in the regulation of structural processes in differentiating and mature neuronal cells. The protein is Serine/threonine-protein kinase 38-like of Homo sapiens (Human).